The following is a 737-amino-acid chain: Polyribonucleotide nucleotidyltransferase (737 aa).

Residues D489 and D495 each contribute to the Mg(2+) site. Residues 556–615 (PKIDTIKIDVDKIKIVIGKGGETIDKIIAETGVKIDIDEEGNVSIYSSDQDAINRAKEII) enclose the KH domain. The 69-residue stretch at 625 to 693 (DEVYRAKVVR…EKGRIDASMK (69 aa)) folds into the S1 motif domain. The tract at residues 691-737 (SMKALLPRPPKPEHDEKGEKSERPHRPRHHKDHKPKKEFTETPKDSE) is disordered. Residues 700–714 (PKPEHDEKGEKSERP) are compositionally biased toward basic and acidic residues. Basic residues predominate over residues 715–724 (HRPRHHKDHK). Positions 725–737 (PKKEFTETPKDSE) are enriched in basic and acidic residues.

The protein belongs to the polyribonucleotide nucleotidyltransferase family. It depends on Mg(2+) as a cofactor.

The protein localises to the cytoplasm. The enzyme catalyses RNA(n+1) + phosphate = RNA(n) + a ribonucleoside 5'-diphosphate. In terms of biological role, involved in mRNA degradation. Catalyzes the phosphorolysis of single-stranded polyribonucleotides processively in the 3'- to 5'-direction. The chain is Polyribonucleotide nucleotidyltransferase from Streptococcus pneumoniae (strain 70585).